The sequence spans 255 residues: 4-hydroxy-tetrahydrodipicolinate reductase (255 aa).

NAD(+) contacts are provided by residues 8–13 (GSTGRM), 88–90 (ATT), and 112–115 (SSNM). The active-site Proton donor/acceptor is the H144. Residue H145 coordinates (S)-2,3,4,5-tetrahydrodipicolinate. Catalysis depends on K148, which acts as the Proton donor. 154–155 (GT) is a (S)-2,3,4,5-tetrahydrodipicolinate binding site.

Belongs to the DapB family.

The protein localises to the cytoplasm. It carries out the reaction (S)-2,3,4,5-tetrahydrodipicolinate + NAD(+) + H2O = (2S,4S)-4-hydroxy-2,3,4,5-tetrahydrodipicolinate + NADH + H(+). It catalyses the reaction (S)-2,3,4,5-tetrahydrodipicolinate + NADP(+) + H2O = (2S,4S)-4-hydroxy-2,3,4,5-tetrahydrodipicolinate + NADPH + H(+). It participates in amino-acid biosynthesis; L-lysine biosynthesis via DAP pathway; (S)-tetrahydrodipicolinate from L-aspartate: step 4/4. In terms of biological role, catalyzes the conversion of 4-hydroxy-tetrahydrodipicolinate (HTPA) to tetrahydrodipicolinate. The chain is 4-hydroxy-tetrahydrodipicolinate reductase from Sulfurovum sp. (strain NBC37-1).